The sequence spans 525 residues: Ribonuclease III domain-containing protein RNC1, chloroplastic (525 aa).

The transit peptide at 1–28 directs the protein to the chloroplast; the sequence is MGPPAMAFQALTLTPLPFSLHSSSRRVR. RNase III domains follow at residues 125 to 271 and 403 to 503; these read LLEA…LCFG and EHPR…CVYG.

As to quaternary structure, interacts with RNA. Part of large ribonucleo-protein particles that contain CAF1 and/or CAF2.

The protein resides in the plastid. It is found in the chloroplast stroma. In terms of biological role, binds specific group II introns in chloroplasts and facilitates their splicing. Acts on both subgroup IIA and subgroup IIB introns. The substrates of the subgroup II also require the CRM domain proteins CAF1 or CAF2. Binds both single-stranded and double-stranded RNA non-specifically, but lacks endonuclease activity. Required for plastid ribosome biogenesis. This chain is Ribonuclease III domain-containing protein RNC1, chloroplastic, found in Zea mays (Maize).